The sequence spans 205 residues: MSKRLESKYKINRRLGVNLWGRAKSPVNKREYGPGQHGQRRKQKPSDFSVQLMAKQKLKGYYGNISEKQFRKYYDEAVRRKGDTSENLIDLLERRLDAVVYRLKFAMTPFAARQFVSHGHITVNGRKVNIPSYIVRDEDVIEVREKSKHLAIVLDAAQSGERDVPEYMEVDHRQMKGRFLRAPKLSDVPYPVQMEPNLVIEFYSR.

The segment at 26-47 (PVNKREYGPGQHGQRRKQKPSD) is disordered. The 61-residue stretch at 94–154 (RRLDAVVYRL…EKSKHLAIVL (61 aa)) folds into the S4 RNA-binding domain.

Belongs to the universal ribosomal protein uS4 family. In terms of assembly, part of the 30S ribosomal subunit. Contacts protein S5. The interaction surface between S4 and S5 is involved in control of translational fidelity.

Its function is as follows. One of the primary rRNA binding proteins, it binds directly to 16S rRNA where it nucleates assembly of the body of the 30S subunit. With S5 and S12 plays an important role in translational accuracy. This chain is Small ribosomal subunit protein uS4, found in Gluconacetobacter diazotrophicus (strain ATCC 49037 / DSM 5601 / CCUG 37298 / CIP 103539 / LMG 7603 / PAl5).